The chain runs to 306 residues: Pantothenate kinase (306 aa).

91–98 provides a ligand contact to ATP; the sequence is GSVAVGKS.

This sequence belongs to the prokaryotic pantothenate kinase family.

It localises to the cytoplasm. The enzyme catalyses (R)-pantothenate + ATP = (R)-4'-phosphopantothenate + ADP + H(+). It participates in cofactor biosynthesis; coenzyme A biosynthesis; CoA from (R)-pantothenate: step 1/5. In Streptococcus thermophilus (strain CNRZ 1066), this protein is Pantothenate kinase.